Reading from the N-terminus, the 313-residue chain is tRNA pseudouridine synthase B (313 aa).

Catalysis depends on D46, which acts as the Nucleophile.

The protein belongs to the pseudouridine synthase TruB family. Type 1 subfamily.

It carries out the reaction uridine(55) in tRNA = pseudouridine(55) in tRNA. Its function is as follows. Responsible for synthesis of pseudouridine from uracil-55 in the psi GC loop of transfer RNAs. This is tRNA pseudouridine synthase B from Nitrosospira multiformis (strain ATCC 25196 / NCIMB 11849 / C 71).